The sequence spans 83 residues: uncharacterized protein (83 aa).

The protein belongs to the chlamydial CPn_0711/CT_665/TC_0036 family.

This is an uncharacterized protein from Chlamydia trachomatis serovar D (strain ATCC VR-885 / DSM 19411 / UW-3/Cx).